A 136-amino-acid polypeptide reads, in one-letter code: Cytidine deaminase (136 aa).

One can recognise a CMP/dCMP-type deaminase domain in the interval 1–128 (MDVEKLIAES…KLLPGAFSKE (128 aa)). 42–44 (NIE) contacts substrate. Position 53 (cysteine 53) interacts with Zn(2+). Glutamate 55 functions as the Proton donor in the catalytic mechanism. 2 residues coordinate Zn(2+): cysteine 86 and cysteine 89.

The protein belongs to the cytidine and deoxycytidylate deaminase family. Zn(2+) is required as a cofactor.

It carries out the reaction cytidine + H2O + H(+) = uridine + NH4(+). The catalysed reaction is 2'-deoxycytidine + H2O + H(+) = 2'-deoxyuridine + NH4(+). Its function is as follows. This enzyme scavenges exogenous and endogenous cytidine and 2'-deoxycytidine for UMP synthesis. In Sporosarcina psychrophila (Bacillus psychrophilus), this protein is Cytidine deaminase (cdd).